Reading from the N-terminus, the 119-residue chain is Large ribosomal subunit protein bL20 (119 aa).

This sequence belongs to the bacterial ribosomal protein bL20 family.

Binds directly to 23S ribosomal RNA and is necessary for the in vitro assembly process of the 50S ribosomal subunit. It is not involved in the protein synthesizing functions of that subunit. This chain is Large ribosomal subunit protein bL20, found in Rhodopseudomonas palustris (strain HaA2).